A 360-amino-acid polypeptide reads, in one-letter code: Protein Wnt-2 (360 aa).

An N-terminal signal peptide occupies residues 1-25 (MNAPLGGIWPWLPLLLTWLTPEVSS). 11 cysteine pairs are disulfide-bonded: C76-C87, C127-C135, C137-C157, C206-C220, C208-C215, C278-C309, C294-C304, C308-C348, C324-C339, C326-C336, and C331-C332. S212 carries the O-palmitoleoyl serine; by PORCN lipid modification. Residue N295 is glycosylated (N-linked (GlcNAc...) asparagine).

It belongs to the Wnt family. Post-translationally, palmitoleoylation is required for efficient binding to frizzled receptors. Depalmitoleoylation leads to Wnt signaling pathway inhibition.

It localises to the secreted. It is found in the extracellular space. The protein localises to the extracellular matrix. Functionally, ligand for members of the frizzled family of seven transmembrane receptors. Functions in the canonical Wnt signaling pathway that results in activation of transcription factors of the TCF/LEF family. Functions as a upstream regulator of FGF10 expression. Plays an important role in embryonic lung development. May contribute to embryonic brain development by regulating the proliferation of dopaminergic precursors and neurons. The sequence is that of Protein Wnt-2 (WNT2) from Felis catus (Cat).